The sequence spans 244 residues: Tyrosine recombinase XerD-like (244 aa).

Residues 1 to 73 (MRDRISAFLE…ACNQFLYFLY (73 aa)) form the Core-binding (CB) domain. The Tyr recombinase domain occupies 90–244 (AEKKTEKPEI…KTVLTLEKYR (155 aa)). Catalysis depends on residues lysine 150 and arginine 211. Tyrosine 243 acts as the O-(3'-phospho-DNA)-tyrosine intermediate in catalysis.

It belongs to the 'phage' integrase family. XerD-like subfamily.

The protein localises to the cytoplasm. Functionally, putative tyrosine recombinase. Not involved in the cutting and rejoining of the recombining DNA molecules on dif(SL) site. The chain is Tyrosine recombinase XerD-like from Streptococcus pneumoniae (strain Hungary19A-6).